The following is a 113-amino-acid chain: MHEMSLAVAAIDLAAEQATQRGFNKVTALWLEVGSFSCVDPDTIAFCFEAAAKGTVVEGAQLHFQHQAAEAWCYDCDKTVTLTERGQACPECGGYKLRVAQGDSLRITDIEVS.

His-2 is a Ni(2+) binding site. Zn(2+) is bound by residues Cys-73, Cys-76, Cys-89, and Cys-92.

This sequence belongs to the HypA/HybF family.

Functionally, involved in the maturation of [NiFe] hydrogenases. Required for nickel insertion into the metal center of the hydrogenase. This chain is Hydrogenase maturation factor HypA, found in Aeromonas salmonicida (strain A449).